Consider the following 192-residue polypeptide: tRNA (pseudouridine(54)-N(1))-methyltransferase (192 aa).

S-adenosyl-L-methionine contacts are provided by Leu114 and Gly138.

This sequence belongs to the methyltransferase superfamily. TrmY family. Homodimer.

The protein localises to the cytoplasm. It carries out the reaction pseudouridine(54) in tRNA + S-adenosyl-L-methionine = N(1)-methylpseudouridine(54) in tRNA + S-adenosyl-L-homocysteine + H(+). Specifically catalyzes the N1-methylation of pseudouridine at position 54 (Psi54) in tRNAs. This is tRNA (pseudouridine(54)-N(1))-methyltransferase from Aeropyrum pernix (strain ATCC 700893 / DSM 11879 / JCM 9820 / NBRC 100138 / K1).